A 301-amino-acid polypeptide reads, in one-letter code: uncharacterized protein (301 aa).

The first 25 residues, 1 to 25, serve as a signal peptide directing secretion; it reads MKFKNTLSIFKILIILFSFYNVAFS. Over 26 to 279 the chain is Extracellular; the sequence is DDTEKYTFKG…STTGSKDSST (254 aa). Positions 174–281 are disordered; the sequence is LYTGSSNTPN…TGSKDSSTGN (108 aa). N-linked (GlcNAc...) asparagine glycans are attached at residues asparagine 191, asparagine 212, asparagine 234, and asparagine 241. The span at 204–234 shows a compositional bias: low complexity; sequence SSSDSTNSNSSSTDTASSSPSSSPSSSPSPN. Positions 254-281 are enriched in low complexity; sequence GGVETSTAGSSTGTTSSTTGSKDSSTGN. Residues 280-300 traverse the membrane as a helical segment; the sequence is GNSILPTLIIVTFFVLTLVIM. Position 301 (serine 301) is a topological domain, cytoplasmic.

Its subcellular location is the membrane. This is an uncharacterized protein from Dictyostelium discoideum (Social amoeba).